Reading from the N-terminus, the 973-residue chain is Valine--tRNA ligase (973 aa).

A 'HIGH' region motif is present at residues Pro-57 to His-67. Residues Lys-569–Ser-573 carry the 'KMSKS' region motif. Lys-572 serves as a coordination point for ATP. A coiled-coil region spans residues Met-901–Ile-970.

Belongs to the class-I aminoacyl-tRNA synthetase family. ValS type 1 subfamily. In terms of assembly, monomer.

The protein resides in the cytoplasm. It carries out the reaction tRNA(Val) + L-valine + ATP = L-valyl-tRNA(Val) + AMP + diphosphate. Catalyzes the attachment of valine to tRNA(Val). As ValRS can inadvertently accommodate and process structurally similar amino acids such as threonine, to avoid such errors, it has a 'posttransfer' editing activity that hydrolyzes mischarged Thr-tRNA(Val) in a tRNA-dependent manner. This is Valine--tRNA ligase from Colwellia psychrerythraea (strain 34H / ATCC BAA-681) (Vibrio psychroerythus).